The sequence spans 738 residues: Conserved oligomeric Golgi complex subunit 4 (738 aa).

It belongs to the COG4 family. Component of the conserved oligomeric Golgi complex which is composed of eight different subunits and is required for normal Golgi morphology and localization. Interacts with COG2 and COG3.

It is found in the golgi apparatus membrane. In terms of biological role, required for normal Golgi function. In Arabidopsis thaliana (Mouse-ear cress), this protein is Conserved oligomeric Golgi complex subunit 4.